The following is a 418-amino-acid chain: Glutamyl-tRNA reductase (418 aa).

Residues 49 to 52 (TCNR), S105, 110 to 112 (EPQ), and Q116 contribute to the substrate site. C50 (nucleophile) is an active-site residue. Residue 185 to 190 (GAGEMI) participates in NADP(+) binding.

It belongs to the glutamyl-tRNA reductase family. In terms of assembly, homodimer.

It carries out the reaction (S)-4-amino-5-oxopentanoate + tRNA(Glu) + NADP(+) = L-glutamyl-tRNA(Glu) + NADPH + H(+). It participates in porphyrin-containing compound metabolism; protoporphyrin-IX biosynthesis; 5-aminolevulinate from L-glutamyl-tRNA(Glu): step 1/2. Functionally, catalyzes the NADPH-dependent reduction of glutamyl-tRNA(Glu) to glutamate 1-semialdehyde (GSA). The chain is Glutamyl-tRNA reductase from Aromatoleum aromaticum (strain DSM 19018 / LMG 30748 / EbN1) (Azoarcus sp. (strain EbN1)).